The chain runs to 408 residues: Serine/threonine transporter SstT (408 aa).

9 helical membrane-spanning segments follow: residues 11 to 31, 43 to 63, 82 to 102, 141 to 161, 192 to 212, 216 to 236, 290 to 310, 316 to 336, and 363 to 383; these read LANGSLVLQILVGIIAGVALA, FLGSLFVGALKAIAPILVFIL, IVVLYLLGTFAAALTAVILSM, ALMTGNYIGILAWGVGLGLAL, IGIFGLVAATFAETGFAAIAG, LLAVLLGAMAFIALIINPLIV, IPLGATINMGGAAITITVLTL, LGIQVDLLTALLLSVVAAISA, and VAMQVVAVGFIIGVIQDAAET.

This sequence belongs to the dicarboxylate/amino acid:cation symporter (DAACS) (TC 2.A.23) family.

The protein resides in the cell inner membrane. It catalyses the reaction L-serine(in) + Na(+)(in) = L-serine(out) + Na(+)(out). The catalysed reaction is L-threonine(in) + Na(+)(in) = L-threonine(out) + Na(+)(out). In terms of biological role, involved in the import of serine and threonine into the cell, with the concomitant import of sodium (symport system). The polypeptide is Serine/threonine transporter SstT (Shewanella oneidensis (strain ATCC 700550 / JCM 31522 / CIP 106686 / LMG 19005 / NCIMB 14063 / MR-1)).